We begin with the raw amino-acid sequence, 289 residues long: NADPH-dependent 7-cyano-7-deazaguanine reductase (289 aa).

81–83 (IES) is a binding site for substrate. 83–84 (SK) lines the NADPH pocket. Cys-196 functions as the Thioimide intermediate in the catalytic mechanism. Asp-203 acts as the Proton donor in catalysis. 235 to 236 (HE) serves as a coordination point for substrate. Residue 264–265 (RG) participates in NADPH binding.

The protein belongs to the GTP cyclohydrolase I family. QueF type 2 subfamily. In terms of assembly, homodimer.

It is found in the cytoplasm. The catalysed reaction is 7-aminomethyl-7-carbaguanine + 2 NADP(+) = 7-cyano-7-deazaguanine + 2 NADPH + 3 H(+). It functions in the pathway tRNA modification; tRNA-queuosine biosynthesis. Catalyzes the NADPH-dependent reduction of 7-cyano-7-deazaguanine (preQ0) to 7-aminomethyl-7-deazaguanine (preQ1). This is NADPH-dependent 7-cyano-7-deazaguanine reductase from Albidiferax ferrireducens (strain ATCC BAA-621 / DSM 15236 / T118) (Rhodoferax ferrireducens).